The primary structure comprises 382 residues: D-galactonate dehydratase (382 aa).

A Mg(2+)-binding site is contributed by D183. Catalysis depends on H185, which acts as the Proton donor. Positions 209 and 235 each coordinate Mg(2+). H285 serves as the catalytic Proton acceptor.

The protein belongs to the mandelate racemase/muconate lactonizing enzyme family. GalD subfamily. Mg(2+) serves as cofactor.

It carries out the reaction D-galactonate = 2-dehydro-3-deoxy-D-galactonate + H2O. It participates in carbohydrate acid metabolism; D-galactonate degradation; D-glyceraldehyde 3-phosphate and pyruvate from D-galactonate: step 1/3. Catalyzes the dehydration of D-galactonate to 2-keto-3-deoxy-D-galactonate. The sequence is that of D-galactonate dehydratase from Salmonella gallinarum (strain 287/91 / NCTC 13346).